A 125-amino-acid polypeptide reads, in one-letter code: SOSS complex subunit C homolog (125 aa).

Positions 43–77 are disordered; the sequence is MPSPQLLGQPTVAPEFLPQGVGLPTNATPPRSAFN. Positions 67–77 are enriched in polar residues; sequence TNATPPRSAFN.

Belongs to the SOSS-C family.

This chain is SOSS complex subunit C homolog, found in Drosophila persimilis (Fruit fly).